A 209-amino-acid polypeptide reads, in one-letter code: Isopentenyl-diphosphate Delta-isomerase (209 aa).

Mn(2+) is bound by residues histidine 31 and histidine 38. In terms of domain architecture, Nudix hydrolase spans 36 to 171 (PLHLAFSVYI…RLLVSPWCRA (136 aa)). Residue cysteine 73 is part of the active site. Cysteine 73 contacts Mg(2+). Histidine 75 is a Mn(2+) binding site. Glutamate 93 provides a ligand contact to Mg(2+). Mn(2+) is bound by residues glutamate 120 and glutamate 122. Glutamate 122 is a catalytic residue.

This sequence belongs to the IPP isomerase type 1 family. Mg(2+) is required as a cofactor. It depends on Mn(2+) as a cofactor.

The protein localises to the cytoplasm. It catalyses the reaction isopentenyl diphosphate = dimethylallyl diphosphate. It participates in isoprenoid biosynthesis; dimethylallyl diphosphate biosynthesis; dimethylallyl diphosphate from isopentenyl diphosphate: step 1/1. In terms of biological role, catalyzes the 1,3-allylic rearrangement of the homoallylic substrate isopentenyl (IPP) to its highly electrophilic allylic isomer, dimethylallyl diphosphate (DMAPP). The sequence is that of Isopentenyl-diphosphate Delta-isomerase from Rhizobium rhizogenes (Agrobacterium rhizogenes).